Here is a 273-residue protein sequence, read N- to C-terminus: Putative pyruvate, phosphate dikinase regulatory protein (273 aa).

149-156 (GPSRTSKT) contacts ADP.

This sequence belongs to the pyruvate, phosphate/water dikinase regulatory protein family. PDRP subfamily.

It carries out the reaction N(tele)-phospho-L-histidyl/L-threonyl-[pyruvate, phosphate dikinase] + ADP = N(tele)-phospho-L-histidyl/O-phospho-L-threonyl-[pyruvate, phosphate dikinase] + AMP + H(+). The enzyme catalyses N(tele)-phospho-L-histidyl/O-phospho-L-threonyl-[pyruvate, phosphate dikinase] + phosphate + H(+) = N(tele)-phospho-L-histidyl/L-threonyl-[pyruvate, phosphate dikinase] + diphosphate. In terms of biological role, bifunctional serine/threonine kinase and phosphorylase involved in the regulation of the pyruvate, phosphate dikinase (PPDK) by catalyzing its phosphorylation/dephosphorylation. This Rickettsia typhi (strain ATCC VR-144 / Wilmington) protein is Putative pyruvate, phosphate dikinase regulatory protein.